We begin with the raw amino-acid sequence, 1302 residues long: Vascular endothelial growth factor receptor kdr-like (1302 aa).

The N-terminal stretch at 1–28 is a signal peptide; sequence MTPLKTSVKAFFTLHVLFSCISHGLVEG. At 29–740 the chain is on the extracellular side; sequence SRLPDPQLLP…GEDGKPNIEV (712 aa). Ig-like C2-type domains are found at residues 34-115, 143-206, 222-318, 326-412, 419-542, 545-636, and 643-728; these read PQLL…HEVS, DPYF…VDNA, KNLA…TKVI, NVTH…ISYK, PKIF…FYVD, PQPF…SALT, and PWLM…AVIT. Disulfide bonds link Cys55–Cys104 and Cys150–Cys199. 2 N-linked (GlcNAc...) asparagine glycosylation sites follow: Asn69 and Asn97. 17 N-linked (GlcNAc...) asparagine glycosylation sites follow: Asn242, Asn265, Asn291, Asn326, Asn370, Asn380, Asn408, Asn453, Asn466, Asn505, Asn517, Asn532, Asn607, Asn611, Asn630, Asn648, and Asn655. A disulfide bond links Cys243 and Cys302. The cysteines at positions 444 and 524 are disulfide-linked. Cys565 and Cys618 are oxidised to a cystine. Cys664 and Cys712 are joined by a disulfide. A helical transmembrane segment spans residues 741–761; sequence IILVSTGAAATFLWIMLILFI. At 762 to 1302 the chain is on the cytoplasmic side; sequence RKLRKPSSAD…YVVRYSTPPV (541 aa). Positions 809-1139 constitute a Protein kinase domain; that stretch reads LRLGKTLGHG…ELVERLGDLL (331 aa). ATP is bound by residues 815–823 and Lys843; that span reads LGHGAFGKV. The Proton acceptor role is filled by Asp1003. Phosphotyrosine; by autocatalysis is present on residues Tyr1029, Tyr1034, and Tyr1150. Disordered regions lie at residues 1159-1179 and 1266-1292; these read TKAD…PVSL and PLVP…PDYN. Over residues 1162-1176 the composition is skewed to polar residues; it reads DPSNQSPTEETSTRP.

The protein belongs to the protein kinase superfamily. Tyr protein kinase family. CSF-1/PDGF receptor subfamily. Interacts with isoform VEGF165 of vegfaa and isoform VEGF171 of vegfab. In terms of processing, phosphorylated and activated by vegfaa and vegfab. First expressed in embryos between 5- and 7-somites. At 7 somites, expressed in discrete bilateral stripes both anteriorly and posteriorly, and in a transverse ectodermal stripe in the hindbrain. From 7-somites, expression seems to extend caudally from the head, and in both directions in the trunk region, until by 20-somites, expression is detected as a continuous band from the anterior head region to the tailbud. Concurrently, cells expressing kdrl in the mid- and posterior trunk regions converge medially. By 24 hours post-fertilization (hpf), expressed in all the endothelial cells lining the vasculature.

It is found in the cell membrane. It carries out the reaction L-tyrosyl-[protein] + ATP = O-phospho-L-tyrosyl-[protein] + ADP + H(+). Receptor for VEGF or VEGFC. Has a tyrosine-protein kinase activity. Combinations of multiple VEGF receptors are required for development of different blood vessel types in the embryo. Involved in angiogenesis, specifically in VEGF-induced sprouting of new blood vessels. Particularly involved in artery formation. Does not appear to be required for hematopoiesis. The polypeptide is Vascular endothelial growth factor receptor kdr-like (kdrl) (Danio rerio (Zebrafish)).